Consider the following 338-residue polypeptide: 3-dehydroquinate synthase (338 aa).

Residues Asp58–Lys63, Gly92–Asp96, Thr116–Thr117, Lys129, and Lys138 each bind NAD(+). Residues Glu169, His229, and His245 each contribute to the Zn(2+) site.

This sequence belongs to the sugar phosphate cyclases superfamily. Dehydroquinate synthase family. It depends on NAD(+) as a cofactor. The cofactor is Co(2+). Zn(2+) is required as a cofactor.

It is found in the cytoplasm. The enzyme catalyses 7-phospho-2-dehydro-3-deoxy-D-arabino-heptonate = 3-dehydroquinate + phosphate. It participates in metabolic intermediate biosynthesis; chorismate biosynthesis; chorismate from D-erythrose 4-phosphate and phosphoenolpyruvate: step 2/7. Catalyzes the conversion of 3-deoxy-D-arabino-heptulosonate 7-phosphate (DAHP) to dehydroquinate (DHQ). The protein is 3-dehydroquinate synthase of Picrophilus torridus (strain ATCC 700027 / DSM 9790 / JCM 10055 / NBRC 100828 / KAW 2/3).